The following is a 430-amino-acid chain: Uric acid permease PucK (430 aa).

The next 14 membrane-spanning stretches (helical) occupy residues 18–38 (MLAMYAGAILVPLIVGAAIGL), 43–63 (LTYLIAIDLFMCGAATLLQLW), 67–87 (YFGIGLPVVLGCTFTAVGPMI), 97–117 (AIYGAIIAAGLIVVLAAGFFG), 122–142 (FFPPVVTGSVVMIIGISLIPT), 163–183 (LLGFGVTAFILLLFYFFKGFI), 185–205 (SIAILLGLIAGTAAAYFMGKV), 209–229 (EVLEASWLHVPSLFYFGPPTF), 233–253 (AVVTMLLVAIVSLVESTGVYF), 274–294 (AEGLAILLGGLFNAFPYTAFS), 310–330 (VIAITGIILVAIGLVPKAAAL), 333–353 (VIPTPVLGGAMIVMFGMVISY), 369–389 (LLIIASSVSLGLGATTVPALF), and 398–418 (VLAGSGIVIGSLTAIALHAFF).

It belongs to the nucleobase:cation symporter-2 (NCS2) (TC 2.A.40) family.

The protein resides in the cell membrane. Functionally, uptake of uric acid. The sequence is that of Uric acid permease PucK (pucK) from Bacillus subtilis (strain 168).